Consider the following 158-residue polypeptide: SsrA-binding protein (158 aa).

This sequence belongs to the SmpB family.

Its subcellular location is the cytoplasm. Required for rescue of stalled ribosomes mediated by trans-translation. Binds to transfer-messenger RNA (tmRNA), required for stable association of tmRNA with ribosomes. tmRNA and SmpB together mimic tRNA shape, replacing the anticodon stem-loop with SmpB. tmRNA is encoded by the ssrA gene; the 2 termini fold to resemble tRNA(Ala) and it encodes a 'tag peptide', a short internal open reading frame. During trans-translation Ala-aminoacylated tmRNA acts like a tRNA, entering the A-site of stalled ribosomes, displacing the stalled mRNA. The ribosome then switches to translate the ORF on the tmRNA; the nascent peptide is terminated with the 'tag peptide' encoded by the tmRNA and targeted for degradation. The ribosome is freed to recommence translation, which seems to be the essential function of trans-translation. The chain is SsrA-binding protein from Bartonella quintana (strain Toulouse) (Rochalimaea quintana).